Reading from the N-terminus, the 271-residue chain is Putative F-box protein L165 (271 aa).

The F-box domain maps to 4–49 (ICELFDDVILEIMNLLSDTDKINFMFCCSRFYYFIDLVYYNDIYDY). The tract at residues 251 to 271 (NIPKIVPKNTHYRNSSKKYRY) is disordered. Over residues 260–271 (THYRNSSKKYRY) the composition is skewed to basic residues.

The chain is Putative F-box protein L165 from Acanthamoeba polyphaga mimivirus (APMV).